The following is a 215-amino-acid chain: Ras-related protein RAB1BV (215 aa).

Residues 22 to 29 (GDSGVGKS), 70 to 74 (DTAGQ), and 128 to 131 (NKAD) each bind GTP. The tract at residues 183-215 (DSDTRQEAQPSITIKPADQSGNQAAAKSACCGS) is disordered. Residues Cys-212 and Cys-213 are each lipidated (S-geranylgeranyl cysteine).

The protein belongs to the small GTPase superfamily. Rab family.

The protein localises to the cell membrane. The sequence is that of Ras-related protein RAB1BV (RAB1BV) from Beta vulgaris (Sugar beet).